We begin with the raw amino-acid sequence, 478 residues long: Adenylosuccinate lyase (478 aa).

Substrate is bound by residues R14 to Y15, K81 to D83, and T107 to S108. H155 (proton donor/acceptor) is an active-site residue. Substrate is bound at residue Q237. Residue S285 is the Proton donor/acceptor of the active site. Substrate-binding residues include R299, R325, S330, and R334.

Belongs to the lyase 1 family. Adenylosuccinate lyase subfamily. Homotetramer. Residues from neighboring subunits contribute catalytic and substrate-binding residues to each active site.

It catalyses the reaction N(6)-(1,2-dicarboxyethyl)-AMP = fumarate + AMP. The catalysed reaction is (2S)-2-[5-amino-1-(5-phospho-beta-D-ribosyl)imidazole-4-carboxamido]succinate = 5-amino-1-(5-phospho-beta-D-ribosyl)imidazole-4-carboxamide + fumarate. The protein operates within purine metabolism; AMP biosynthesis via de novo pathway; AMP from IMP: step 2/2. It participates in purine metabolism; IMP biosynthesis via de novo pathway; 5-amino-1-(5-phospho-D-ribosyl)imidazole-4-carboxamide from 5-amino-1-(5-phospho-D-ribosyl)imidazole-4-carboxylate: step 2/2. Its function is as follows. Catalyzes two non-sequential steps in de novo AMP synthesis: converts (S)-2-(5-amino-1-(5-phospho-D-ribosyl)imidazole-4-carboxamido)succinate (SAICAR) to fumarate plus 5-amino-1-(5-phospho-D-ribosyl)imidazole-4-carboxamide, and thereby also contributes to de novo IMP synthesis, and converts succinyladenosine monophosphate (SAMP) to AMP and fumarate. This Caenorhabditis briggsae protein is Adenylosuccinate lyase.